Reading from the N-terminus, the 329-residue chain is Glycerol-3-phosphate dehydrogenase [NAD(P)+] (329 aa).

NADPH is bound by residues Trp-11 and Lys-101. Sn-glycerol 3-phosphate contacts are provided by Lys-101, Gly-132, and Ser-134. Position 136 (Ala-136) interacts with NADPH. 5 residues coordinate sn-glycerol 3-phosphate: Lys-188, Asp-241, Ser-251, Arg-252, and Asn-253. Residue Lys-188 is the Proton acceptor of the active site. Arg-252 is a binding site for NADPH. NADPH is bound by residues Val-276 and Glu-278.

It belongs to the NAD-dependent glycerol-3-phosphate dehydrogenase family.

The protein localises to the cytoplasm. The catalysed reaction is sn-glycerol 3-phosphate + NAD(+) = dihydroxyacetone phosphate + NADH + H(+). The enzyme catalyses sn-glycerol 3-phosphate + NADP(+) = dihydroxyacetone phosphate + NADPH + H(+). It functions in the pathway membrane lipid metabolism; glycerophospholipid metabolism. Functionally, catalyzes the reduction of the glycolytic intermediate dihydroxyacetone phosphate (DHAP) to sn-glycerol 3-phosphate (G3P), the key precursor for phospholipid synthesis. This Phytoplasma australiense protein is Glycerol-3-phosphate dehydrogenase [NAD(P)+].